Here is a 342-residue protein sequence, read N- to C-terminus: MNTNDFDFYLPEELIAQTPLEKRDASKLLVIDHKNKTMTDSHFDHILDELKPGDALVMNNTRVLPARLYGEKQDTHGHVELLLLKNTEGDQWEVLAKPAKRLRVGTKVSFGDGRLIATVTKELEHGGRIVEFSYDGIFLEVLESLGEMPLPPYIHEKLEDRDRYQTVYAKENGSAAAPTAGLHFTKELLEKIETKGVKLVYLTLHVGLGTFRPVSVDNLDEHEMHSEFYQLSKEAADTLNAVKESGGRIVAVGTTSIRTLETIGSKFNGELKADSGWTNIFIKPGYQFKVVDAFSTNFHLPKSTLVMLVSAFAGRDFVLEAYNHAVEERYRFFSFGDAMFVK.

Belongs to the QueA family. As to quaternary structure, monomer.

It localises to the cytoplasm. It catalyses the reaction 7-aminomethyl-7-carbaguanosine(34) in tRNA + S-adenosyl-L-methionine = epoxyqueuosine(34) in tRNA + adenine + L-methionine + 2 H(+). The protein operates within tRNA modification; tRNA-queuosine biosynthesis. Its function is as follows. Transfers and isomerizes the ribose moiety from AdoMet to the 7-aminomethyl group of 7-deazaguanine (preQ1-tRNA) to give epoxyqueuosine (oQ-tRNA). This Streptococcus agalactiae serotype V (strain ATCC BAA-611 / 2603 V/R) protein is S-adenosylmethionine:tRNA ribosyltransferase-isomerase.